A 63-amino-acid polypeptide reads, in one-letter code: Large ribosomal subunit protein uL29 (63 aa).

It belongs to the universal ribosomal protein uL29 family.

The polypeptide is Large ribosomal subunit protein uL29 (Photobacterium profundum (strain SS9)).